Here is a 373-residue protein sequence, read N- to C-terminus: Probable G-protein coupled receptor 45 (373 aa).

Over 1–38 (MACNSTPMGTYEHLLLNVSNTLDPGDTPLSAPLRISLA) the chain is Extracellular. A glycan (N-linked (GlcNAc...) asparagine) is linked at N17. A helical transmembrane segment spans residues 39 to 59 (IMMLLMIVVGFLGNTVVCIIV). Over 60 to 75 (YQRPAMRSAINLLLAT) the chain is Cytoplasmic. A helical transmembrane segment spans residues 76 to 96 (LAFSDIMLSLCCMPFTAITLI). The Extracellular segment spans residues 97–109 (TVRWHFGDHFCRL). Residues 110–130 (SATLYWFFVLEGVAILLIISV) form a helical membrane-spanning segment. The Cytoplasmic portion of the chain corresponds to 131 to 149 (DRFLIIVQRQDKLNPRRAK). A helical membrane pass occupies residues 150–170 (MIIAASWVLSFCISAPSFTGW). At 171–198 (TFMEVPARAPQCVLGYTEFPAERAYVVT) the chain is on the extracellular side. Residues 199-219 (LVVAVFFAPFGVMLCSYLCIL) form a helical membrane-spanning segment. Residues 220-269 (NTVRKNAVRVHNQSDSLDLRQLTGAGLRRLRRQQQQASLDLSFKTKAFTT) lie on the Cytoplasmic side of the membrane. Residues 270-290 (ILILFVGFSLCWLPHSVYSLL) traverse the membrane as a helical segment. Topologically, residues 291–306 (SAFSRRFYYSASFYTT) are extracellular. The chain crosses the membrane as a helical span at residues 307-327 (STCVLWLSYLKSVFNPIVYCW). The Cytoplasmic segment spans residues 328-373 (RIKKFREACIELLPHTFQILPKVPERIQRKIQPSTIYVCNENQSAV).

It belongs to the G-protein coupled receptor 1 family. Brain specific.

It localises to the cell membrane. Functionally, orphan receptor. May play a role in brain function. The sequence is that of Probable G-protein coupled receptor 45 (Gpr45) from Mus musculus (Mouse).